A 369-amino-acid chain; its full sequence is Flagellar P-ring protein (369 aa).

The N-terminal stretch at 1–23 is a signal peptide; the sequence is MIKQFAVSLLLVLLTLVTTTASA.

This sequence belongs to the FlgI family. The basal body constitutes a major portion of the flagellar organelle and consists of four rings (L,P,S, and M) mounted on a central rod.

The protein resides in the periplasm. It is found in the bacterial flagellum basal body. Its function is as follows. Assembles around the rod to form the L-ring and probably protects the motor/basal body from shearing forces during rotation. This is Flagellar P-ring protein from Photorhabdus laumondii subsp. laumondii (strain DSM 15139 / CIP 105565 / TT01) (Photorhabdus luminescens subsp. laumondii).